A 212-amino-acid polypeptide reads, in one-letter code: Large ribosomal subunit protein bL25 (212 aa).

The tract at residues 1–25 (MSQSTIHKIAVKKRTETGKNENNRL) is disordered. Residues 13 to 24 (KRTETGKNENNR) show a composition bias toward basic and acidic residues.

It belongs to the bacterial ribosomal protein bL25 family. CTC subfamily. As to quaternary structure, part of the 50S ribosomal subunit; part of the 5S rRNA/L5/L18/L25 subcomplex. Contacts the 5S rRNA. Binds to the 5S rRNA independently of L5 and L18.

Functionally, this is one of the proteins that binds to the 5S RNA in the ribosome where it forms part of the central protuberance. The protein is Large ribosomal subunit protein bL25 of Leptospira borgpetersenii serovar Hardjo-bovis (strain JB197).